The primary structure comprises 221 residues: Large ribosomal subunit protein uL4 (221 aa).

The segment at 56 to 83 is disordered; that stretch reads HATKTRGMVSGGGRKPWKQKGTGRARQG.

It belongs to the universal ribosomal protein uL4 family. In terms of assembly, part of the 50S ribosomal subunit.

One of the primary rRNA binding proteins, this protein initially binds near the 5'-end of the 23S rRNA. It is important during the early stages of 50S assembly. It makes multiple contacts with different domains of the 23S rRNA in the assembled 50S subunit and ribosome. Its function is as follows. Forms part of the polypeptide exit tunnel. This is Large ribosomal subunit protein uL4 from Bifidobacterium adolescentis (strain ATCC 15703 / DSM 20083 / NCTC 11814 / E194a).